The primary structure comprises 300 residues: MSATAVTADGLEEIEVDVVAVWKEGYVYENRGDTSVEQKITMTKGMKNLNSETKTLTATHTVGRTLKVGDPFEIGSVEVSYSFSHQESQVSMTQTEVYSSQVIEHTVTIPPTSKFTRWKLNADVGGTDIEYMYLIDEVTPISVTQTIPQVIRSRAKILVGRQIHLGTTAVRIKHAERQEYMTVIERKKWPAATLGKSNLFKFVLFEDSSGTRIKTLNTMYPGYEWAYSSDQGGVYFDESSDNPKQRWALSKALPLRHGDVVTFMNKYFTNSGLCYDDGPATNVYCLDKREDKWILEVVNP.

The interval 12 to 35 (EEIEVDVVAVWKEGYVYENRGDTS) is N-terminal cap domain. The interval 36–109 (VEQKITMTKG…SQVIEHTVTI (74 aa)) is beta-hairpin domain. The tract at residues 110–158 (PPTSKFTRWKLNADVGGTDIEYMYLIDEVTPISVTQTIPQVIRSRAKIL) is N-terminal cap domain. The tract at residues 159–299 (VGRQIHLGTT…EDKWILEVVN (141 aa)) is C-terminal receptor-binding domain. An N-(acyl)-sphingosylphosphocholine-binding residues include lysine 187, serine 229, tyrosine 235, and tyrosine 284. Residues cysteine 274 and cysteine 285 are joined by a disulfide bond.

Belongs to the lysenin family. In terms of assembly, binds to sphingomyelin as a monomer by using its C-terminal domain. Forms a nonamer when sphingomyelin/LRP-3 ratio is lower than ca 500. Oligomerization, but not binding, is influenced by the fluidity of sphingomyelin. Expressed by coelomocytes.

The protein localises to the secreted. It is found in the target cell membrane. Its function is as follows. Pore-forming toxin that specifically binds sphingomyelin in the plasma membrane of various cells. Has antibacterial and hemolytic activity. In Eisenia fetida (Red wiggler worm), this protein is Lysenin-related protein 3.